The primary structure comprises 285 residues: Biotin synthase (285 aa).

The Radical SAM core domain maps to 2–223 (STRKQIFLCA…RRAHTLLGED (222 aa)). Residues Cys20, Cys24, and Cys27 each contribute to the [4Fe-4S] cluster site. Cys64, Cys99, and Cys157 together coordinate [2Fe-2S] cluster.

This sequence belongs to the radical SAM superfamily. Biotin synthase family. As to quaternary structure, homodimer. It depends on [4Fe-4S] cluster as a cofactor. [2Fe-2S] cluster serves as cofactor.

The enzyme catalyses (4R,5S)-dethiobiotin + (sulfur carrier)-SH + 2 reduced [2Fe-2S]-[ferredoxin] + 2 S-adenosyl-L-methionine = (sulfur carrier)-H + biotin + 2 5'-deoxyadenosine + 2 L-methionine + 2 oxidized [2Fe-2S]-[ferredoxin]. It participates in cofactor biosynthesis; biotin biosynthesis; biotin from 7,8-diaminononanoate: step 2/2. Functionally, catalyzes the conversion of dethiobiotin (DTB) to biotin by the insertion of a sulfur atom into dethiobiotin via a radical-based mechanism. This Sulfurovum sp. (strain NBC37-1) protein is Biotin synthase.